The following is a 508-amino-acid chain: Photosystem II CP47 reaction center protein (508 aa).

Helical transmembrane passes span 21–36 (SVHIMHTALVAGWAGS), 101–115 (IVFSGLCFLAAIWHW), 140–156 (GIHLFLSGLACFGFGAF), 203–218 (IAAGTLGILAGLFHLS), 237–252 (VLSSSIAAVFFAAFVV), and 457–472 (SFALLFFFGHIWHGAR).

It belongs to the PsbB/PsbC family. PsbB subfamily. As to quaternary structure, PSII is composed of 1 copy each of membrane proteins PsbA, PsbB, PsbC, PsbD, PsbE, PsbF, PsbH, PsbI, PsbJ, PsbK, PsbL, PsbM, PsbT, PsbX, PsbY, PsbZ, Psb30/Ycf12, at least 3 peripheral proteins of the oxygen-evolving complex and a large number of cofactors. It forms dimeric complexes. Binds multiple chlorophylls. PSII binds additional chlorophylls, carotenoids and specific lipids. serves as cofactor.

The protein localises to the plastid. Its subcellular location is the chloroplast thylakoid membrane. In terms of biological role, one of the components of the core complex of photosystem II (PSII). It binds chlorophyll and helps catalyze the primary light-induced photochemical processes of PSII. PSII is a light-driven water:plastoquinone oxidoreductase, using light energy to abstract electrons from H(2)O, generating O(2) and a proton gradient subsequently used for ATP formation. This chain is Photosystem II CP47 reaction center protein, found in Vitis vinifera (Grape).